Reading from the N-terminus, the 258-residue chain is Ribonuclease HII (258 aa).

The RNase H type-2 domain maps to 71–258 (QLIAGIDEVG…PIKTMVNFKS (188 aa)). Residues Asp-77, Glu-78, and Asp-169 each coordinate a divalent metal cation.

The protein belongs to the RNase HII family. It depends on Mn(2+) as a cofactor. The cofactor is Mg(2+).

The protein localises to the cytoplasm. The catalysed reaction is Endonucleolytic cleavage to 5'-phosphomonoester.. Endonuclease that specifically degrades the RNA of RNA-DNA hybrids. The polypeptide is Ribonuclease HII (rnhB) (Lactococcus lactis subsp. lactis (strain IL1403) (Streptococcus lactis)).